A 305-amino-acid chain; its full sequence is Alpha-N-acetylgalactosaminide alpha-2,6-sialyltransferase 3 (305 aa).

The Cytoplasmic portion of the chain corresponds to 1–8; it reads MACILKRK. Residues 9–28 traverse the membrane as a helical; Signal-anchor for type II membrane protein segment; it reads SVIAVSFIAAFLFLLVVRLV. At 29-305 the chain is on the lumenal side; it reads NEVNFPLLLN…IFTHPNWTLS (277 aa). Residues Cys80 and Cys229 are joined by a disulfide bond. 3 N-linked (GlcNAc...) asparagine glycosylation sites follow: Asn148, Asn239, and Asn301.

Belongs to the glycosyltransferase 29 family. In terms of tissue distribution, expressed in brain and kidney. Observed in the epithelium of the proximal tubules, marginal expression was also found in the distal tubules and collecting tubules.

It is found in the golgi apparatus membrane. The enzyme catalyses an alpha-Neu5Ac-(2-&gt;3)-beta-D-Gal-(1-&gt;3)-D-GlcNAc derivative + CMP-N-acetyl-beta-neuraminate = an alpha-Neu5Ac-(2-&gt;3)-beta-D-Gal-(1-&gt;3)-[alpha-Neu5Ac-(2-&gt;6)]-D-GlcNAc derivative + CMP + H(+). It carries out the reaction a ganglioside GM1b (d18:1(4E)) + CMP-N-acetyl-beta-neuraminate = a ganglioside GD1alpha (d18:1(4E)) + CMP + H(+). The catalysed reaction is a globoside MSGG + CMP-N-acetyl-beta-neuraminate = a globoside DSGG + CMP + H(+). It catalyses the reaction 3-O-[alpha-Neu5Ac-(2-&gt;3)-beta-D-Gal-(1-&gt;3)-alpha-D-GalNAc]-L-Ser-[protein] + CMP-N-acetyl-beta-neuraminate = a 3-O-{alpha-Neu5Ac-(2-&gt;3)-beta-D-Gal-(1-&gt;3)-[alpha-Neu5Ac-(2-&gt;6)]-alpha-D-GalNAc}-L-seryl-[protein] + CMP + H(+). The enzyme catalyses 3-O-[alpha-Neu5Ac-(2-&gt;3)-beta-D-Gal-(1-&gt;3)-alpha-D-GalNAc]-L-Thr-[protein] + CMP-N-acetyl-beta-neuraminate = a 3-O-{alpha-Neu5Ac-(2-&gt;3)-beta-D-Gal-(1-&gt;3)-[alpha-Neu5Ac-(2-&gt;6)]-alpha-D-GalNAc}-L-threonyl-[protein] + CMP + H(+). It participates in protein modification; protein glycosylation. The protein operates within glycolipid biosynthesis. In terms of biological role, transfers the sialyl group (N-acetyl-alpha-neuraminyl or NeuAc) from CMP-NeuAc to the GalNAc residue on the NeuAc-alpha-2,3-Gal-beta-1,3-GalNAc sequence of glycoproteins and glycolipids forming an alpha-2,6-linkage. Produces branched type disialyl structures by transfer of a sialyl group onto a GalNAc residue inside the backbone core chains. ST6GalNAcIII prefers glycolipids to glycoproteins, predominantly catalyzing the biosynthesis of ganglioside GD1alpha from GM1b. GD1alpha is a critical molecule in the communication and interaction between neuronal cells and their supportive cells, particularly in brain tissues, and functions as an adhesion molecule in the process of metastasis. Sialylation of glycoproteins or glycosphingolipids is very important in tumor development, neuronal development, nerve repair, immunological processes and regulation of hormone sensitivity. In Homo sapiens (Human), this protein is Alpha-N-acetylgalactosaminide alpha-2,6-sialyltransferase 3 (ST6GALNAC3).